The chain runs to 423 residues: D-tagatose-1,6-bisphosphate aldolase subunit GatZ (423 aa).

Belongs to the GatZ/KbaZ family. GatZ subfamily. In terms of assembly, forms a complex with GatY.

Its pathway is carbohydrate metabolism; D-tagatose 6-phosphate degradation; D-glyceraldehyde 3-phosphate and glycerone phosphate from D-tagatose 6-phosphate: step 2/2. Its function is as follows. Component of the tagatose-1,6-bisphosphate aldolase GatYZ that is required for full activity and stability of the Y subunit. Could have a chaperone-like function for the proper and stable folding of GatY. When expressed alone, GatZ does not show any aldolase activity. Is involved in the catabolism of galactitol. The chain is D-tagatose-1,6-bisphosphate aldolase subunit GatZ from Salmonella paratyphi B (strain ATCC BAA-1250 / SPB7).